The following is a 296-amino-acid chain: 33 kDa chaperonin (296 aa).

2 cysteine pairs are disulfide-bonded: cysteine 233–cysteine 235 and cysteine 267–cysteine 270.

It belongs to the HSP33 family. In terms of processing, under oxidizing conditions two disulfide bonds are formed involving the reactive cysteines. Under reducing conditions zinc is bound to the reactive cysteines and the protein is inactive.

It localises to the cytoplasm. Redox regulated molecular chaperone. Protects both thermally unfolding and oxidatively damaged proteins from irreversible aggregation. Plays an important role in the bacterial defense system toward oxidative stress. In Actinobacillus pleuropneumoniae serotype 3 (strain JL03), this protein is 33 kDa chaperonin.